Here is an 89-residue protein sequence, read N- to C-terminus: Protein PerC (89 aa).

Its function is as follows. Transcriptional activator of eaeA/bfpA expression in enteropathogenic E.coli. The sequence is that of Protein PerC (perC) from Escherichia coli O111:H-.